A 435-amino-acid polypeptide reads, in one-letter code: Uracil permease (435 aa).

The next 12 membrane-spanning stretches (helical) occupy residues 17 to 37, 42 to 62, 67 to 87, 91 to 111, 122 to 142, 161 to 181, 191 to 213, 234 to 254, 311 to 331, 336 to 356, 376 to 396, and 399 to 419; these read FSWV…TILV, GMSP…YLLI, IPAY…VKAT, GAAM…ALLI, ILPP…LAST, LKHF…AIFL, LIGI…QPVL, VTLG…SEHI, VFSV…GFIG, LISS…FGII, NLII…IQVS, and GFQV…NLIL.

It belongs to the nucleobase:cation symporter-2 (NCS2) (TC 2.A.40) family.

It localises to the cell membrane. Transport of uracil in the cell. The protein is Uracil permease (pyrP) of Bacillus subtilis (strain 168).